The sequence spans 288 residues: Acetyl-coenzyme A carboxylase carboxyl transferase subunit beta, chloroplastic (288 aa).

The CoA carboxyltransferase N-terminal domain occupies L30–K288. Zn(2+) is bound by residues C34, C37, C53, and C56. Residues C34–C56 form a C4-type zinc finger.

It belongs to the AccD/PCCB family. In terms of assembly, acetyl-CoA carboxylase is a heterohexamer composed of biotin carboxyl carrier protein, biotin carboxylase and 2 subunits each of ACCase subunit alpha and ACCase plastid-coded subunit beta (accD). Zn(2+) is required as a cofactor.

The protein resides in the plastid. It is found in the chloroplast stroma. The enzyme catalyses N(6)-carboxybiotinyl-L-lysyl-[protein] + acetyl-CoA = N(6)-biotinyl-L-lysyl-[protein] + malonyl-CoA. Its pathway is lipid metabolism; malonyl-CoA biosynthesis; malonyl-CoA from acetyl-CoA: step 1/1. Component of the acetyl coenzyme A carboxylase (ACC) complex. Biotin carboxylase (BC) catalyzes the carboxylation of biotin on its carrier protein (BCCP) and then the CO(2) group is transferred by the transcarboxylase to acetyl-CoA to form malonyl-CoA. In Pyropia yezoensis (Susabi-nori), this protein is Acetyl-coenzyme A carboxylase carboxyl transferase subunit beta, chloroplastic.